A 342-amino-acid polypeptide reads, in one-letter code: Erlin-1 (342 aa).

Residues 1-6 (MAHVGA) lie on the Cytoplasmic side of the membrane. Residues 7 to 23 (VVAAMAGLMAILLHSSI) traverse the membrane as a helical segment. At 24 to 342 (HKIEEGHLAV…ASKPKASEGH (319 aa)) the chain is on the lumenal side. Asn106 carries N-linked (GlcNAc...) asparagine glycosylation. The segment at 308 to 342 (SSASRPAAGESEQLESLSMRESLKKASKPKASEGH) is disordered.

The protein belongs to the band 7/mec-2 family.

Its subcellular location is the endoplasmic reticulum membrane. Functionally, mediates the endoplasmic reticulum-associated degradation (ERAD) of inositol 1,4,5-trisphosphate receptors (IP3Rs). Involved in regulation of cellular cholesterol homeostasis by regulation the SREBP signaling pathway. Binds cholesterol and may promote ER retention of the SCAP-SREBF complex. The chain is Erlin-1 from Danio rerio (Zebrafish).